Consider the following 880-residue polypeptide: Probable receptor-like protein kinase At5g38990 (880 aa).

Positions 1-21 are cleaved as a signal peptide; the sequence is MICHVLVIFTILVSAVVDATA. Residues 22-440 are Extracellular-facing; sequence SYEPTDVFLI…GKGKSSHVLP (419 aa). Asn-46, Asn-136, Asn-158, Asn-210, Asn-256, Asn-263, Asn-297, and Asn-324 each carry an N-linked (GlcNAc...) asparagine glycan. The helical transmembrane segment at 441 to 461 threads the bilayer; sequence IIIAVVGSAVALAFFVLVVVL. Residues 462–880 are Cytoplasmic-facing; sequence VVMKRKKKSN…FSEINEPKAR (419 aa). The tract at residues 471 to 505 is disordered; the sequence is NESSVDTTNKPSTNSSWGPLLHGTGSTNTKSASSL. 2 stretches are compositionally biased toward polar residues: residues 472–487 and 494–505; these read ESSV…NSSW and TGSTNTKSASSL. A Protein kinase domain is found at 525-810; the sequence is FEEKLIIGVG…EFALQLHETA (286 aa). Residues 531–539 and Lys-554 each bind ATP; that span reads IGVGGFGSV. Asp-653 functions as the Proton acceptor in the catalytic mechanism. The disordered stretch occupies residues 820 to 846; that stretch reads LDLMPSGEVGTTTDGEDDLFSRTTGHV.

Belongs to the protein kinase superfamily. Ser/Thr protein kinase family.

The protein resides in the membrane. This is Probable receptor-like protein kinase At5g38990 from Arabidopsis thaliana (Mouse-ear cress).